The primary structure comprises 92 residues: Small ribosomal subunit protein uS19 (92 aa).

The protein belongs to the universal ribosomal protein uS19 family.

Functionally, protein S19 forms a complex with S13 that binds strongly to the 16S ribosomal RNA. This is Small ribosomal subunit protein uS19 from Magnetococcus marinus (strain ATCC BAA-1437 / JCM 17883 / MC-1).